Reading from the N-terminus, the 630-residue chain is Betaine/ectoine transporter LcoP (630 aa).

Residues 1-13 (MSTNSGNNLPESQ) are compositionally biased toward polar residues. The interval 1–28 (MSTNSGNNLPESQESPEEPHYPHDTHPG) is disordered. Positions 17-26 (EEPHYPHDTH) are enriched in basic and acidic residues. 12 consecutive transmembrane segments (helical) span residues 47–67 (TVFGVTAALILAFIAWGISSP), 85–105 (TGWLLNFVMLIGIGTMLYIAF), 125–145 (FSWIAMMFGAGIGVGIFFFGP), 177–197 (FHWGLSAWGLYALVGGALAYS), 230–250 (MAIIATLFGTAATLGLSAIQV), 267–287 (ILIAIIAILTIGFIISSVSGV), 299–319 (ISLTLGLVLFVFITGPTLFLL), 354–374 (WTAFYWAWWIAWTPFVGMFIA), 385–405 (FALITMAIPSFILILAFTIFG), 436–456 (LPLYSITPFILIFVLAVFFVT), 479–499 (LIVVFWGLCMMGIAVVMLLTG), and 510–530 (LTILIAIPFALVLIVMAIAFI). Residues 611–630 (WADGWTPESTEEGEVDAKKD) are disordered.

Belongs to the BCCT transporter (TC 2.A.15) family.

It localises to the cell membrane. Its activity is regulated as follows. Uptake is activated by hyperosmotic stress. Shows a small but significant chill stimulation around 15 degrees Celsius. Functionally, involved in the uptake of osmoprotectants. Can transport betaine and ectoine. Na(+) is probably the coupling ion. The protein is Betaine/ectoine transporter LcoP of Corynebacterium glutamicum (strain ATCC 13032 / DSM 20300 / JCM 1318 / BCRC 11384 / CCUG 27702 / LMG 3730 / NBRC 12168 / NCIMB 10025 / NRRL B-2784 / 534).